A 222-amino-acid polypeptide reads, in one-letter code: 2-C-methyl-D-erythritol 4-phosphate cytidylyltransferase (222 aa).

It belongs to the IspD/TarI cytidylyltransferase family. IspD subfamily.

It catalyses the reaction 2-C-methyl-D-erythritol 4-phosphate + CTP + H(+) = 4-CDP-2-C-methyl-D-erythritol + diphosphate. The protein operates within isoprenoid biosynthesis; isopentenyl diphosphate biosynthesis via DXP pathway; isopentenyl diphosphate from 1-deoxy-D-xylulose 5-phosphate: step 2/6. Catalyzes the formation of 4-diphosphocytidyl-2-C-methyl-D-erythritol from CTP and 2-C-methyl-D-erythritol 4-phosphate (MEP). This Azobacteroides pseudotrichonymphae genomovar. CFP2 protein is 2-C-methyl-D-erythritol 4-phosphate cytidylyltransferase.